The primary structure comprises 268 residues: Hydroxyacylglutathione hydrolase (268 aa).

Zn(2+)-binding residues include His-56, His-58, Asp-60, His-61, His-113, Asp-130, and His-168.

Belongs to the metallo-beta-lactamase superfamily. Glyoxalase II family. Monomer. Zn(2+) is required as a cofactor.

The enzyme catalyses an S-(2-hydroxyacyl)glutathione + H2O = a 2-hydroxy carboxylate + glutathione + H(+). It participates in secondary metabolite metabolism; methylglyoxal degradation; (R)-lactate from methylglyoxal: step 2/2. Thiolesterase that catalyzes the hydrolysis of S-D-lactoyl-glutathione to form glutathione and D-lactic acid. This Hydrogenovibrio crunogenus (strain DSM 25203 / XCL-2) (Thiomicrospira crunogena) protein is Hydroxyacylglutathione hydrolase.